The primary structure comprises 274 residues: Cytochrome c oxidase subunit 3 (274 aa).

Topologically, residues 1–15 (MTHQTHAYHMVNPSP) are mitochondrial matrix. A helical transmembrane segment spans residues 16-34 (WPLTGALSALLMTSGLAMW). Over 35-40 (FHFNSS) the chain is Mitochondrial intermembrane. A helical transmembrane segment spans residues 41 to 66 (MLLSLGMLTNLLTMYQWWRDIVREGT). The Mitochondrial matrix segment spans residues 67 to 72 (FQGHHT). The chain crosses the membrane as a helical span at residues 73–105 (SIVQKGLRYGMVLFIISEIFFFAGFFWAFYHSS). Over 106–128 (LAPTPELGGCWPPTGIHPLNPLE) the chain is Mitochondrial intermembrane. The helical transmembrane segment at 129–152 (VPLLNTAVLLASGVSITWAHHSLM) threads the bilayer. The Mitochondrial matrix portion of the chain corresponds to 153–155 (EGN). The helical transmembrane segment at 156–183 (RVQMLQALLITITLGLYFTLLQASEYFE) threads the bilayer. At 184–190 (TSFTISD) the chain is on the mitochondrial intermembrane side. The helical transmembrane segment at 191–223 (GVYGSTFFMATGFHGLHVIIGSTFLTVCFFRQL) threads the bilayer. The Mitochondrial matrix portion of the chain corresponds to 224-232 (SFHFTSNHH). The helical transmembrane segment at 233–256 (FGFEAAAWYWHFVDVVWLFLYVSI) threads the bilayer. Over 257-274 (YWWGSYSFSIDPMQLTSN) the chain is Mitochondrial intermembrane.

The protein belongs to the cytochrome c oxidase subunit 3 family. As to quaternary structure, component of the cytochrome c oxidase (complex IV, CIV), a multisubunit enzyme composed of 14 subunits. The complex is composed of a catalytic core of 3 subunits MT-CO1, MT-CO2 and MT-CO3, encoded in the mitochondrial DNA, and 11 supernumerary subunits COX4I, COX5A, COX5B, COX6A, COX6B, COX6C, COX7A, COX7B, COX7C, COX8 and NDUFA4, which are encoded in the nuclear genome. The complex exists as a monomer or a dimer and forms supercomplexes (SCs) in the inner mitochondrial membrane with NADH-ubiquinone oxidoreductase (complex I, CI) and ubiquinol-cytochrome c oxidoreductase (cytochrome b-c1 complex, complex III, CIII), resulting in different assemblies (supercomplex SCI(1)III(2)IV(1) and megacomplex MCI(2)III(2)IV(2)).

Its subcellular location is the mitochondrion inner membrane. It carries out the reaction 4 Fe(II)-[cytochrome c] + O2 + 8 H(+)(in) = 4 Fe(III)-[cytochrome c] + 2 H2O + 4 H(+)(out). Its function is as follows. Component of the cytochrome c oxidase, the last enzyme in the mitochondrial electron transport chain which drives oxidative phosphorylation. The respiratory chain contains 3 multisubunit complexes succinate dehydrogenase (complex II, CII), ubiquinol-cytochrome c oxidoreductase (cytochrome b-c1 complex, complex III, CIII) and cytochrome c oxidase (complex IV, CIV), that cooperate to transfer electrons derived from NADH and succinate to molecular oxygen, creating an electrochemical gradient over the inner membrane that drives transmembrane transport and the ATP synthase. Cytochrome c oxidase is the component of the respiratory chain that catalyzes the reduction of oxygen to water. Electrons originating from reduced cytochrome c in the intermembrane space (IMS) are transferred via the dinuclear copper A center (CU(A)) of subunit 2 and heme A of subunit 1 to the active site in subunit 1, a binuclear center (BNC) formed by heme A3 and copper B (CU(B)). The BNC reduces molecular oxygen to 2 water molecules using 4 electrons from cytochrome c in the IMS and 4 protons from the mitochondrial matrix. The sequence is that of Cytochrome c oxidase subunit 3 (MT-CO3) from Lemur catta (Ring-tailed lemur).